Here is a 162-residue protein sequence, read N- to C-terminus: Beta-lactoglobulin (162 aa).

3 cysteine pairs are disulfide-bonded: C66–C160, C106–C119, and C106–C121.

It belongs to the calycin superfamily. Lipocalin family. Under physiological conditions beta-lactoglobulin exists as an equilibrium mixture of monomeric and dimeric forms. In terms of processing, alternate disulfide bonds occur in equal amounts.

It localises to the secreted. Functionally, lactoglobulin is the primary component of whey, it binds retinol and is probably involved in the transport of that molecule. In Ovis aries musimon (Mouflon), this protein is Beta-lactoglobulin (LGB).